The chain runs to 104 residues: Integration host factor subunit beta (104 aa).

This sequence belongs to the bacterial histone-like protein family. Heterodimer of an alpha and a beta chain.

Functionally, this protein is one of the two subunits of integration host factor, a specific DNA-binding protein that functions in genetic recombination as well as in transcriptional and translational control. This Xylella fastidiosa (strain 9a5c) protein is Integration host factor subunit beta (ihfB).